The primary structure comprises 64 residues: Large ribosomal subunit protein bL35 (64 aa).

It belongs to the bacterial ribosomal protein bL35 family.

In Aliivibrio fischeri (strain ATCC 700601 / ES114) (Vibrio fischeri), this protein is Large ribosomal subunit protein bL35.